The following is a 546-amino-acid chain: Chaperonin GroEL (546 aa).

ATP is bound by residues 30–33 (TMGP), Lys51, 87–91 (DGTTT), Gly415, 478–480 (NAA), and Asp494.

It belongs to the chaperonin (HSP60) family. In terms of assembly, forms a cylinder of 14 subunits composed of two heptameric rings stacked back-to-back. Interacts with the co-chaperonin GroES.

Its subcellular location is the cytoplasm. The catalysed reaction is ATP + H2O + a folded polypeptide = ADP + phosphate + an unfolded polypeptide.. In terms of biological role, together with its co-chaperonin GroES, plays an essential role in assisting protein folding. The GroEL-GroES system forms a nano-cage that allows encapsulation of the non-native substrate proteins and provides a physical environment optimized to promote and accelerate protein folding. In Wolinella succinogenes (strain ATCC 29543 / DSM 1740 / CCUG 13145 / JCM 31913 / LMG 7466 / NCTC 11488 / FDC 602W) (Vibrio succinogenes), this protein is Chaperonin GroEL.